Consider the following 78-residue polypeptide: Exodeoxyribonuclease 7 small subunit (78 aa).

This sequence belongs to the XseB family. Heterooligomer composed of large and small subunits.

The protein resides in the cytoplasm. The catalysed reaction is Exonucleolytic cleavage in either 5'- to 3'- or 3'- to 5'-direction to yield nucleoside 5'-phosphates.. Functionally, bidirectionally degrades single-stranded DNA into large acid-insoluble oligonucleotides, which are then degraded further into small acid-soluble oligonucleotides. The protein is Exodeoxyribonuclease 7 small subunit of Finegoldia magna (strain ATCC 29328 / DSM 20472 / WAL 2508) (Peptostreptococcus magnus).